Consider the following 475-residue polypeptide: Ribulose bisphosphate carboxylase large chain (475 aa).

Positions 1–2 (MV) are excised as a propeptide. P3 carries the N-acetylproline modification. K14 carries the post-translational modification N6,N6,N6-trimethyllysine. Positions 123 and 173 each coordinate substrate. Catalysis depends on K175, which acts as the Proton acceptor. K177 contacts substrate. Mg(2+) contacts are provided by K201, D203, and E204. K201 carries the N6-carboxylysine modification. H294 acts as the Proton acceptor in catalysis. Substrate contacts are provided by R295, H327, and S379.

It belongs to the RuBisCO large chain family. Type I subfamily. In terms of assembly, heterohexadecamer of 8 large chains and 8 small chains. It depends on Mg(2+) as a cofactor.

Its subcellular location is the plastid. It is found in the chloroplast. It carries out the reaction 2 (2R)-3-phosphoglycerate + 2 H(+) = D-ribulose 1,5-bisphosphate + CO2 + H2O. The catalysed reaction is D-ribulose 1,5-bisphosphate + O2 = 2-phosphoglycolate + (2R)-3-phosphoglycerate + 2 H(+). RuBisCO catalyzes two reactions: the carboxylation of D-ribulose 1,5-bisphosphate, the primary event in carbon dioxide fixation, as well as the oxidative fragmentation of the pentose substrate in the photorespiration process. Both reactions occur simultaneously and in competition at the same active site. This Dunaliella tertiolecta (Green alga) protein is Ribulose bisphosphate carboxylase large chain.